We begin with the raw amino-acid sequence, 579 residues long: GPI alpha-1,2-mannosyltransferase 4 (579 aa).

8 helical membrane-spanning segments follow: residues 131–151 (LLLT…APPM), 156–173 (WNAL…VFYT), 180–200 (IEGL…TWGP), 216–236 (LGGI…FAVV), 258–278 (ALVL…TDSW), 369–389 (YLLL…HQEA), 391–411 (FLIP…QPVP), and 416–436 (VVLF…GGLV).

It belongs to the glycosyltransferase 22 family. PIGZ subfamily. In terms of tissue distribution, widely expressed at low level, with highest level in brain and colon.

The protein localises to the endoplasmic reticulum membrane. It participates in glycolipid biosynthesis; glycosylphosphatidylinositol-anchor biosynthesis. In terms of biological role, alpha-1,2-mannosyltransferase that catalyzes the transfer of the fourth mannose, via an alpha-1,2 bond, from a dolichol-phosphate-mannose (Dol-P-Man) to an alpha-D-Man-(1-&gt;2)-alpha-D-Man-(1-&gt;6)-2-PEtn-alpha-D-Man-(1-&gt;4)-alpha-D-GlcN-(1-&gt;6)-(1-radyl,2-acyl-sn-glycero-3-phospho)-2-acyl-inositol (also termed H6) intermediate and participates in the twelfth step of the glycosylphosphatidylinositol-anchor biosynthesis. The presence of a fourth mannose in GPI is facultative, suggesting that it only exists in some tissues. In Homo sapiens (Human), this protein is GPI alpha-1,2-mannosyltransferase 4.